The primary structure comprises 239 residues: Sensory rhodopsin-1 (239 aa).

Residues 1 to 3 (MDA) are Extracellular-facing. Residues 4–25 (VATAYLGGAVALIVGVAFVWLL) form a helical membrane-spanning segment. Residues 26 to 34 (YRSLDGSPH) are Cytoplasmic-facing. Residues 35-56 (QSALAPLAIIPVFAGLSYVGMA) traverse the membrane as a helical segment. Residues 57-70 (YDIGTVIVNGNQIV) are Extracellular-facing. Residues 71 to 92 (GLRYIDWLVTTPILVGYVGYAA) traverse the membrane as a helical segment. At 93–95 (GAS) the chain is on the cytoplasmic side. Residues 96 to 118 (RRSIIGVMVADALMIAVGAGAVV) traverse the membrane as a helical segment. The Extracellular segment spans residues 119–122 (TDGT). A helical membrane pass occupies residues 123 to 150 (LKWALFGVSSIFHLSLFAYLYVIFPRVV). Residues 151 to 153 (PDV) are Cytoplasmic-facing. Residues 154–181 (PEQIGLFNLLKNHIGLLWLAYPLVWLFG) traverse the membrane as a helical segment. The Extracellular segment spans residues 182-189 (PAGIGEAT). A helical membrane pass occupies residues 190–222 (AAGVALTYVFLDVLAKVPYVYFFYARRRVFMHS). At Lys205 the chain carries N6-(retinylidene)lysine. Residues 223–239 (ESPPAPEQATVEATAAD) are Cytoplasmic-facing.

The protein belongs to the archaeal/bacterial/fungal opsin family. Interacts with HTR-I.

The protein resides in the cell membrane. Functionally, involved in the control of phototaxis. Mediates both photoattractant (in the orange light) and photophobic (in the near UV light) responses. The signal is then transmitted to the sensory rhodopsin I transducer (HTR-I). The polypeptide is Sensory rhodopsin-1 (sopI) (Halobacterium salinarum (strain ATCC 29341 / DSM 671 / R1)).